A 445-amino-acid polypeptide reads, in one-letter code: Glycine betaine monooxygenase oxygenase subunit (445 aa).

The Rieske domain occupies 73 to 180 (WLFVGMTCEI…VTHAGGFLFV (108 aa)). 4 residues coordinate [2Fe-2S] cluster: Cys115, His117, Cys135, and His138. The Fe cation site is built by His234 and His239.

The protein belongs to the bacterial ring-hydroxylating dioxygenase alpha subunit family. As to quaternary structure, homotrimer. The system is composed of an oxygenase subunit (BmoA) and a reductase subunit (BmoB). Maximal specific activity is obtained when the ratio of BmoA to BmoB is 5:1. The cofactor is [2Fe-2S] cluster. Requires Fe cation as cofactor.

It catalyses the reaction glycine betaine + NADH + O2 + H(+) = N,N-dimethylglycine + formaldehyde + NAD(+) + H2O. Its activity is regulated as follows. Activity is absolutely dependent on the presence of BmoB. Glycine betaine monooxygenase activity is significantly enhanced by Fe(2+) and severely inhibited by heavy-metal ions, including Co(2+), Mn(2+), Zn(2+), Cu(2+) and Ag(+). Severely inhibited by EDTA. Involved in degradation of glycine betaine. Part of a Rieske-type oxygenase system that catalyzes the conversion of glycine betaine (GB) to dimethylglycine (DMG). This subunit is the terminal oxygenase component of the system. Is specific for GB, and does not show any activity on choline, L-carnitine, stachydrine, dimethylglycine or sarcosine. Activity is strictly dependent on NADH. The polypeptide is Glycine betaine monooxygenase oxygenase subunit (Chromohalobacter salexigens (strain ATCC BAA-138 / DSM 3043 / CIP 106854 / NCIMB 13768 / 1H11)).